Reading from the N-terminus, the 1133-residue chain is Protein TOPLESS-RELATED PROTEIN 2 (1133 aa).

The region spanning 4–36 (LSRELVFLILQFLDEEKFKETVHKLEQESAFYF) is the LisH domain. The region spanning 34–92 (FYFNMKHFEDLVQGGEWDEVEKYLSGFTKVEDNRYSMKIFFEIRKQKYLEALDRHDRAK) is the CTLH domain. 12 WD repeats span residues 344–384 (NQGS…RIAH), 451–492 (AHIG…KQYT), 495–536 (GHEA…SRVD), 539–582 (APGH…IKRT), 586–625 (FRKRSLGVVQFDTTRNRFLAAGDEFVVKFWDMDNTNILTT), 630–669 (GGLPASPRLRFNREGSLLAVTANENGIKILANTDGQRLLR), 771–810 (ATSSKVVRLLYTNNGVALLALGSNAVHKLWKWQRTDRNPN), 838–876 (NPEEATACIALSKNDSYVMSASGGKVSLFNMMTFKVMTT), 879–919 (APPP…VKSK), 922–961 (GHSKKITGLAFSQSMNMLVSSGADAQLCAWSIDGWEKKKS), 970–1011 (RSGA…RSWS), and 1015–1054 (ALPAPISSAIYSCDGLLIYAGFCDGAIGVFEAESLRLRCR). The segment at 1102 to 1133 (DSDPKWGVAPPQDNGTHPTISAAPAAANKPEV) is disordered.

Tetramer. Interacts with D53, probably via the EAR motifs. Binds to AP2-1/TOE1, AP2-3/SNB and AP2-2/IDS1. Interacts with WOX1. Interacts with MOF1. In terms of tissue distribution, expressed in stems and panicles. Detected in roots, seeds, leaves and sheath. Expressed in the meristem and lateral organ primordia.

It localises to the nucleus. Its function is as follows. Transcriptional corepressor involved in branch formation regulation, presumably by suppressing primary branch formation and promoting secondary branch formation. Required for the cell elongation in the first internode and pollen development. Probable downstream regulator of strigolactones signaling important in axillary meristem maintenance. Acts in auxin signaling and is associated with the regulation of histone deacetylation. Essential for the function of miR172 microRNA and its target genes in regulating panicle development. In Oryza sativa subsp. japonica (Rice), this protein is Protein TOPLESS-RELATED PROTEIN 2.